A 602-amino-acid chain; its full sequence is Elongation factor 4 (602 aa).

The region spanning 2 to 184 (KKIRNFAIIA…RIVRDIPPPK (183 aa)) is the tr-type G domain. GTP is bound by residues 14-19 (DHGKST) and 131-134 (NKID).

It belongs to the TRAFAC class translation factor GTPase superfamily. Classic translation factor GTPase family. LepA subfamily.

The protein resides in the cell membrane. It carries out the reaction GTP + H2O = GDP + phosphate + H(+). Functionally, required for accurate and efficient protein synthesis under certain stress conditions. May act as a fidelity factor of the translation reaction, by catalyzing a one-codon backward translocation of tRNAs on improperly translocated ribosomes. Back-translocation proceeds from a post-translocation (POST) complex to a pre-translocation (PRE) complex, thus giving elongation factor G a second chance to translocate the tRNAs correctly. Binds to ribosomes in a GTP-dependent manner. The polypeptide is Elongation factor 4 (Baumannia cicadellinicola subsp. Homalodisca coagulata).